A 428-amino-acid polypeptide reads, in one-letter code: Serine--tRNA ligase (428 aa).

Residue 231–233 participates in L-serine binding; it reads TAE. 262–264 provides a ligand contact to ATP; the sequence is RSE. An L-serine-binding site is contributed by Glu-285. 349 to 352 serves as a coordination point for ATP; that stretch reads EISS. Ser-385 contributes to the L-serine binding site.

It belongs to the class-II aminoacyl-tRNA synthetase family. Type-1 seryl-tRNA synthetase subfamily. Homodimer. The tRNA molecule binds across the dimer.

Its subcellular location is the cytoplasm. It catalyses the reaction tRNA(Ser) + L-serine + ATP = L-seryl-tRNA(Ser) + AMP + diphosphate + H(+). The catalysed reaction is tRNA(Sec) + L-serine + ATP = L-seryl-tRNA(Sec) + AMP + diphosphate + H(+). It participates in aminoacyl-tRNA biosynthesis; selenocysteinyl-tRNA(Sec) biosynthesis; L-seryl-tRNA(Sec) from L-serine and tRNA(Sec): step 1/1. Functionally, catalyzes the attachment of serine to tRNA(Ser). Is also able to aminoacylate tRNA(Sec) with serine, to form the misacylated tRNA L-seryl-tRNA(Sec), which will be further converted into selenocysteinyl-tRNA(Sec). This chain is Serine--tRNA ligase, found in Staphylococcus haemolyticus (strain JCSC1435).